Consider the following 252-residue polypeptide: Thiazole synthase (252 aa).

The Schiff-base intermediate with DXP role is filled by lysine 95. 1-deoxy-D-xylulose 5-phosphate-binding positions include glycine 156, alanine 182–glycine 183, and asparagine 204–threonine 205.

It belongs to the ThiG family. Homotetramer. Forms heterodimers with either ThiH or ThiS.

It localises to the cytoplasm. The catalysed reaction is [ThiS sulfur-carrier protein]-C-terminal-Gly-aminoethanethioate + 2-iminoacetate + 1-deoxy-D-xylulose 5-phosphate = [ThiS sulfur-carrier protein]-C-terminal Gly-Gly + 2-[(2R,5Z)-2-carboxy-4-methylthiazol-5(2H)-ylidene]ethyl phosphate + 2 H2O + H(+). It functions in the pathway cofactor biosynthesis; thiamine diphosphate biosynthesis. Catalyzes the rearrangement of 1-deoxy-D-xylulose 5-phosphate (DXP) to produce the thiazole phosphate moiety of thiamine. Sulfur is provided by the thiocarboxylate moiety of the carrier protein ThiS. In vitro, sulfur can be provided by H(2)S. This chain is Thiazole synthase, found in Shewanella sp. (strain ANA-3).